Reading from the N-terminus, the 95-residue chain is MESRDIILRPVVTEASMALIDNKRYTFDVDPRATKTQVKKAIEEIFEVTVIKINIMNVKGKLKRQGRYAGYTKKRRKAIVQLSADSKEIQLFGEE.

It belongs to the universal ribosomal protein uL23 family. Part of the 50S ribosomal subunit. Contacts protein L29, and trigger factor when it is bound to the ribosome.

One of the early assembly proteins it binds 23S rRNA. One of the proteins that surrounds the polypeptide exit tunnel on the outside of the ribosome. Forms the main docking site for trigger factor binding to the ribosome. This is Large ribosomal subunit protein uL23 from Pediococcus pentosaceus (strain ATCC 25745 / CCUG 21536 / LMG 10740 / 183-1w).